A 270-amino-acid chain; its full sequence is uncharacterized protein (270 aa).

Residues 166-186 (RRKENNISNESVSEEPESPLF) are disordered.

This is an uncharacterized protein from Ostreid herpesvirus 1 (isolate France) (OsHV-1).